The sequence spans 261 residues: MVAPAHNYESRNILDLLSLKGKNAVVFGGARGIGHAICSVFAEAGANAFIVYNTTPGEKAAKEIAQANGVKTYTCKCDVTIPKEVEHAFAEIQKVFDTIDIVVPNNGICTGKSAIDMTYEEFANEINVNLLGVFNVAHNAGPIFQKQGHGSLVATASMSGVVVNVPQQQCAYNTSKAGVIQLIKSLAVEWRKFARVNCVSPGYTTSDMTGGKFHKEWEPYTPFERNGLAKEIASAYLYLASDAASYASGTNLIVDGGYTSI.

Residues I33, D78, and N105 each coordinate NADP(+). S157 functions as the Proton donor in the catalytic mechanism. NADP(+)-binding residues include Y172, K176, and S206. The active-site Proton acceptor is Y172. K176 acts as the Lowers pKa of active site Tyr in catalysis.

The protein belongs to the short-chain dehydrogenases/reductases (SDR) family.

It is found in the cytoplasm. It localises to the nucleus. This is an uncharacterized protein from Schizosaccharomyces pombe (strain 972 / ATCC 24843) (Fission yeast).